Reading from the N-terminus, the 316-residue chain is Methionyl-tRNA formyltransferase (316 aa).

Position 117–120 (117–120 (SLLP)) interacts with (6S)-5,6,7,8-tetrahydrofolate.

It belongs to the Fmt family.

It catalyses the reaction L-methionyl-tRNA(fMet) + (6R)-10-formyltetrahydrofolate = N-formyl-L-methionyl-tRNA(fMet) + (6S)-5,6,7,8-tetrahydrofolate + H(+). Functionally, attaches a formyl group to the free amino group of methionyl-tRNA(fMet). The formyl group appears to play a dual role in the initiator identity of N-formylmethionyl-tRNA by promoting its recognition by IF2 and preventing the misappropriation of this tRNA by the elongation apparatus. This Janthinobacterium sp. (strain Marseille) (Minibacterium massiliensis) protein is Methionyl-tRNA formyltransferase.